We begin with the raw amino-acid sequence, 333 residues long: Ribose-phosphate pyrophosphokinase (333 aa).

58–60 (DGE) is a binding site for ATP. Mg(2+)-binding residues include histidine 151 and aspartate 190. Lysine 214 is an active-site residue. Residues arginine 216, aspartate 240, and 244–248 (DTAGT) each bind D-ribose 5-phosphate.

It belongs to the ribose-phosphate pyrophosphokinase family. Class I subfamily. As to quaternary structure, homohexamer. Mg(2+) serves as cofactor.

Its subcellular location is the cytoplasm. The enzyme catalyses D-ribose 5-phosphate + ATP = 5-phospho-alpha-D-ribose 1-diphosphate + AMP + H(+). It participates in metabolic intermediate biosynthesis; 5-phospho-alpha-D-ribose 1-diphosphate biosynthesis; 5-phospho-alpha-D-ribose 1-diphosphate from D-ribose 5-phosphate (route I): step 1/1. In terms of biological role, involved in the biosynthesis of the central metabolite phospho-alpha-D-ribosyl-1-pyrophosphate (PRPP) via the transfer of pyrophosphoryl group from ATP to 1-hydroxyl of ribose-5-phosphate (Rib-5-P). This Synechocystis sp. (strain ATCC 27184 / PCC 6803 / Kazusa) protein is Ribose-phosphate pyrophosphokinase.